Here is a 533-residue protein sequence, read N- to C-terminus: Berberine bridge enzyme-like 28 (533 aa).

Residues 1–23 (MEFSSFLFTILLFSLNISPLVSA) form the signal peptide. A disulfide bridge connects residues cysteine 34 and cysteine 96. One can recognise an FAD-binding PCMH-type domain in the interval 74-249 (ETPKPVSIIT…LSWKVKLVDV (176 aa)). Histidine 111 is modified (pros-8alpha-FAD histidine). Asparagine 142 and asparagine 440 each carry an N-linked (GlcNAc...) asparagine glycan.

This sequence belongs to the oxygen-dependent FAD-linked oxidoreductase family. The cofactor is FAD.

Its subcellular location is the secreted. It is found in the cell wall. Its function is as follows. Involved in adaptation to salt stress. This Arabidopsis thaliana (Mouse-ear cress) protein is Berberine bridge enzyme-like 28.